The chain runs to 1027 residues: Circadian locomoter output cycles protein kaput (1027 aa).

The 51-residue stretch at 15-65 (LCRKSRNLSEKKRRDQFNSLVNDLSALISTSSRKMDKSTVLKSTIAFLKNH) folds into the bHLH domain. PAS domains lie at 88–160 (NDEY…VIEP) and 255–321 (REMS…ELRQ). 5 disordered regions span residues 377–402 (RKEG…ASTG), 443–575 (TSPA…QQLQ), 765–800 (QQMM…TQQQ), 869–911 (TINP…NNED), and 926–1027 (SINF…GSSQ). The segment covering 383–402 (SGNSNSITNNGSSKVIASTG) has biased composition (low complexity). Polar residues predominate over residues 443–486 (TSPAVDSSPMWSASAVQPSGSCQINPLKTSRPASSYGNISSTGI). 2 stretches are compositionally biased toward low complexity: residues 504–516 (SDST…SVTS) and 552–575 (QQQQ…QQLQ). Positions 780–1027 (QHNLQQQHQS…SPHTAPGSSQ (248 aa)) are implicated in the circadian rhythmicity. Low complexity-rich tracts occupy residues 871–909 (NPFN…QNNN) and 951–995 (SGSN…NQNQ). Over residues 1006–1027 (QMSQEQSQNLFNSPHTAPGSSQ) the composition is skewed to polar residues.

Efficient DNA binding requires dimerization with another bHLH protein. Forms a heterodimer with Cycle. As to expression, widely expressed. Found in head, body, and appendage fractions.

The protein localises to the nucleus. Its function is as follows. Circadian regulator that acts as a transcription factor and generates a rhythmic output with a period of about 24 hours. Oscillates in antiphase to the cycling observed for period (PER) and timeless (TIM). According to PubMed:9742131, reaches peak abundance within several hours of the dark-light transition at ZT0 (zeitgeber 0), whereas PubMed:9616122 describes bimodal oscillating expression with maximum at ZT5 and ZT23. Clock-cycle heterodimers activate cycling transcription of PER and TIM by binding to the E-box (5'-CACGTG-3') present in their promoters. Once induced, Period and Timeless block Clock's ability to transactivate their promoters. This is Circadian locomoter output cycles protein kaput (Clk) from Drosophila melanogaster (Fruit fly).